The chain runs to 177 residues: ATP synthase subunit delta (177 aa).

Belongs to the ATPase delta chain family. As to quaternary structure, F-type ATPases have 2 components, F(1) - the catalytic core - and F(0) - the membrane proton channel. F(1) has five subunits: alpha(3), beta(3), gamma(1), delta(1), epsilon(1). F(0) has three main subunits: a(1), b(2) and c(10-14). The alpha and beta chains form an alternating ring which encloses part of the gamma chain. F(1) is attached to F(0) by a central stalk formed by the gamma and epsilon chains, while a peripheral stalk is formed by the delta and b chains.

The protein resides in the cell inner membrane. F(1)F(0) ATP synthase produces ATP from ADP in the presence of a proton or sodium gradient. F-type ATPases consist of two structural domains, F(1) containing the extramembraneous catalytic core and F(0) containing the membrane proton channel, linked together by a central stalk and a peripheral stalk. During catalysis, ATP synthesis in the catalytic domain of F(1) is coupled via a rotary mechanism of the central stalk subunits to proton translocation. Functionally, this protein is part of the stalk that links CF(0) to CF(1). It either transmits conformational changes from CF(0) to CF(1) or is implicated in proton conduction. This chain is ATP synthase subunit delta, found in Enterobacter sp. (strain 638).